The following is a 287-amino-acid chain: 2-dehydro-3-deoxyphosphooctonate aldolase (287 aa).

The protein belongs to the KdsA family.

The protein localises to the cytoplasm. It carries out the reaction D-arabinose 5-phosphate + phosphoenolpyruvate + H2O = 3-deoxy-alpha-D-manno-2-octulosonate-8-phosphate + phosphate. The protein operates within carbohydrate biosynthesis; 3-deoxy-D-manno-octulosonate biosynthesis; 3-deoxy-D-manno-octulosonate from D-ribulose 5-phosphate: step 2/3. Its pathway is bacterial outer membrane biogenesis; lipopolysaccharide biosynthesis. The chain is 2-dehydro-3-deoxyphosphooctonate aldolase from Bradyrhizobium sp. (strain ORS 278).